Reading from the N-terminus, the 399-residue chain is Cell division protein FtsZ (399 aa).

GTP-binding positions include Gly-18–Asn-22, Gly-105–Gly-107, Glu-136, Arg-140, and Asp-184. The segment at Gly-311–Lys-399 is disordered. Acidic residues predominate over residues Ala-388–Lys-399.

This sequence belongs to the FtsZ family. In terms of assembly, homodimer. Polymerizes to form a dynamic ring structure in a strictly GTP-dependent manner. Interacts directly with several other division proteins.

Its subcellular location is the cytoplasm. Its function is as follows. Essential cell division protein that forms a contractile ring structure (Z ring) at the future cell division site. The regulation of the ring assembly controls the timing and the location of cell division. One of the functions of the FtsZ ring is to recruit other cell division proteins to the septum to produce a new cell wall between the dividing cells. Binds GTP and shows GTPase activity. In Streptomyces coelicolor (strain ATCC BAA-471 / A3(2) / M145), this protein is Cell division protein FtsZ.